The sequence spans 241 residues: 3-oxoacyl-[acyl-carrier-protein] reductase FabG (241 aa).

NADP(+) contacts are provided by residues 13 to 16 (GASG), serine 38, 57 to 58 (EV), and asparagine 83. Serine 135 serves as a coordination point for substrate. The Proton acceptor role is filled by tyrosine 148. NADP(+) is bound by residues 148-152 (YCASK) and isoleucine 181.

It belongs to the short-chain dehydrogenases/reductases (SDR) family. As to quaternary structure, homotetramer.

The enzyme catalyses a (3R)-hydroxyacyl-[ACP] + NADP(+) = a 3-oxoacyl-[ACP] + NADPH + H(+). Its pathway is lipid metabolism; fatty acid biosynthesis. Its function is as follows. Catalyzes the NADPH-dependent reduction of beta-ketoacyl-ACP substrates to beta-hydroxyacyl-ACP products, the first reductive step in the elongation cycle of fatty acid biosynthesis. The chain is 3-oxoacyl-[acyl-carrier-protein] reductase FabG (fabG) from Rickettsia conorii (strain ATCC VR-613 / Malish 7).